The primary structure comprises 117 residues: Ig kappa chain V region 12F2 (117 aa).

An N-terminal signal peptide occupies residues 1–6 (LPGARC). The tract at residues 7–29 (AYDMTQTPASVEVAVGGTVTIKC) is framework-1. Cys29 and Cys86 form a disulfide bridge. Positions 30 to 40 (QASQSISTYLS) are complementarity-determining-1. A framework-2 region spans residues 41–55 (WYQQKPGQRPKLLIY). Positions 56–62 (RASTLAS) are complementarity-determining-2. The interval 63-94 (GVSSRFKGSGSGTEFTLTISGVECADAATYYC) is framework-3. Positions 95–106 (QQGWSSSNVENV) are complementarity-determining-3. Residues 107-116 (FGGGTEVVVK) are framework-4.

The polypeptide is Ig kappa chain V region 12F2 (Oryctolagus cuniculus (Rabbit)).